Consider the following 184-residue polypeptide: Ribosome-recycling factor (184 aa).

It belongs to the RRF family.

Its subcellular location is the cytoplasm. In terms of biological role, responsible for the release of ribosomes from messenger RNA at the termination of protein biosynthesis. May increase the efficiency of translation by recycling ribosomes from one round of translation to another. The polypeptide is Ribosome-recycling factor (Leptospira borgpetersenii serovar Hardjo-bovis (strain JB197)).